Consider the following 199-residue polypeptide: GTP cyclohydrolase-2 (199 aa).

52-56 (RMHSE) provides a ligand contact to GTP. 3 residues coordinate Zn(2+): Cys-57, Cys-68, and Cys-70. Residues Gln-73, 94–96 (EGR), and Thr-116 each bind GTP. Asp-128 functions as the Proton acceptor in the catalytic mechanism. Arg-130 (nucleophile) is an active-site residue. GTP contacts are provided by Thr-151 and Lys-156.

The protein belongs to the GTP cyclohydrolase II family. It depends on Zn(2+) as a cofactor.

The catalysed reaction is GTP + 4 H2O = 2,5-diamino-6-hydroxy-4-(5-phosphoribosylamino)-pyrimidine + formate + 2 phosphate + 3 H(+). It functions in the pathway cofactor biosynthesis; riboflavin biosynthesis; 5-amino-6-(D-ribitylamino)uracil from GTP: step 1/4. Its function is as follows. Catalyzes the conversion of GTP to 2,5-diamino-6-ribosylamino-4(3H)-pyrimidinone 5'-phosphate (DARP), formate and pyrophosphate. The polypeptide is GTP cyclohydrolase-2 (Aliivibrio fischeri (strain MJ11) (Vibrio fischeri)).